Reading from the N-terminus, the 220-residue chain is Uracil phosphoribosyltransferase 2 (220 aa).

77–80 (ARDI) is a GTP binding site. 5-phospho-alpha-D-ribose 1-diphosphate contacts are provided by Arg87 and Arg113. Arg134 provides a ligand contact to GTP. 5-phospho-alpha-D-ribose 1-diphosphate is bound by residues Asp140 and 140–148 (DPLLATGNS). A D-ribose 5-phosphate-binding site is contributed by Tyr204. Uracil is bound by residues Val205 and 210 to 212 (GDF). Asp211 contributes to the 5-phospho-alpha-D-ribose 1-diphosphate binding site.

The protein belongs to the UPRTase family. Mg(2+) is required as a cofactor.

It catalyses the reaction UMP + diphosphate = 5-phospho-alpha-D-ribose 1-diphosphate + uracil. The protein operates within pyrimidine metabolism; UMP biosynthesis via salvage pathway; UMP from uracil: step 1/1. Its activity is regulated as follows. Allosterically activated by GTP. In terms of biological role, catalyzes the conversion of uracil and 5-phospho-alpha-D-ribose 1-diphosphate (PRPP) to UMP and diphosphate. The chain is Uracil phosphoribosyltransferase 2 from Schizosaccharomyces pombe (strain 972 / ATCC 24843) (Fission yeast).